We begin with the raw amino-acid sequence, 173 residues long: Crossover junction endodeoxyribonuclease RuvC (173 aa).

Active-site residues include Asp8, Glu67, and Asp139. The Mg(2+) site is built by Asp8, Glu67, and Asp139.

The protein belongs to the RuvC family. In terms of assembly, homodimer which binds Holliday junction (HJ) DNA. The HJ becomes 2-fold symmetrical on binding to RuvC with unstacked arms; it has a different conformation from HJ DNA in complex with RuvA. In the full resolvosome a probable DNA-RuvA(4)-RuvB(12)-RuvC(2) complex forms which resolves the HJ. The cofactor is Mg(2+).

Its subcellular location is the cytoplasm. The enzyme catalyses Endonucleolytic cleavage at a junction such as a reciprocal single-stranded crossover between two homologous DNA duplexes (Holliday junction).. Functionally, the RuvA-RuvB-RuvC complex processes Holliday junction (HJ) DNA during genetic recombination and DNA repair. Endonuclease that resolves HJ intermediates. Cleaves cruciform DNA by making single-stranded nicks across the HJ at symmetrical positions within the homologous arms, yielding a 5'-phosphate and a 3'-hydroxyl group; requires a central core of homology in the junction. The consensus cleavage sequence is 5'-(A/T)TT(C/G)-3'. Cleavage occurs on the 3'-side of the TT dinucleotide at the point of strand exchange. HJ branch migration catalyzed by RuvA-RuvB allows RuvC to scan DNA until it finds its consensus sequence, where it cleaves and resolves the cruciform DNA. The chain is Crossover junction endodeoxyribonuclease RuvC from Pseudoalteromonas atlantica (strain T6c / ATCC BAA-1087).